The primary structure comprises 548 residues: MASKEILFDVKAREKLSRGVDKLANAVKVTLGPKGRNVVIEKSFGSPVITKDGVTVAKEIELEDKFENMGAQMVKEVASKTSDIAGDGTTTATILAQAIYREGVKLVAAGRSPMAIKRGIDKAVEKLVKELGTLAKPTRDQKEIAQIGTISANSDTTIGNIIAEAMAKVGKEGVITVEEAKGLETTLEVVEGMQFDRGYLSPYFVTDPEKMICELDEPFILCNEKKISSMKDMLPVLEQVAKMNRPLVIIAEDVEGEALATLVVNKLRGTLQVVAVKAPGFGDRRKAMLQDIAVLTGGTVVSEDMGVKLENISVADLGTAKRVVVDKENTTIVDGAGKSEDIKARVKQIRAQIDETTSDYDREKLQERLAKLVGGVAVINVGAATETEMKEKKDRVEDALNATRAAVEEGIVPGGGTAYIRISRVLDDVKPADDDEAAGVNIIRRAIEEPLRQISSNAGYEGSIVVEKVRDGKDGFGFNAASGEFEDLIKAGVIDPKKVTRIALQNAASVASLLLTTECAIAEKPEAKKDMPMPGGGMGGMGGMGGMY.

Residues 30–33, K51, 87–91, G415, 479–481, and D495 each bind ATP; these read TLGP, DGTTT, and NAA.

Belongs to the chaperonin (HSP60) family. As to quaternary structure, forms a cylinder of 14 subunits composed of two heptameric rings stacked back-to-back. Interacts with the co-chaperonin GroES.

Its subcellular location is the cytoplasm. The catalysed reaction is ATP + H2O + a folded polypeptide = ADP + phosphate + an unfolded polypeptide.. Functionally, together with its co-chaperonin GroES, plays an essential role in assisting protein folding. The GroEL-GroES system forms a nano-cage that allows encapsulation of the non-native substrate proteins and provides a physical environment optimized to promote and accelerate protein folding. The polypeptide is Chaperonin GroEL (Nitratidesulfovibrio vulgaris (strain DSM 19637 / Miyazaki F) (Desulfovibrio vulgaris)).